The chain runs to 101 residues: Urease subunit beta (101 aa).

Belongs to the urease beta subunit family. As to quaternary structure, heterotrimer of UreA (gamma), UreB (beta) and UreC (alpha) subunits. Three heterotrimers associate to form the active enzyme.

Its subcellular location is the cytoplasm. The catalysed reaction is urea + 2 H2O + H(+) = hydrogencarbonate + 2 NH4(+). It participates in nitrogen metabolism; urea degradation; CO(2) and NH(3) from urea (urease route): step 1/1. The protein is Urease subunit beta of Bradyrhizobium diazoefficiens (strain JCM 10833 / BCRC 13528 / IAM 13628 / NBRC 14792 / USDA 110).